We begin with the raw amino-acid sequence, 250 residues long: Triosephosphate isomerase, glycosomal (250 aa).

2 residues coordinate substrate: Asn11 and Lys13. The Electrophile role is filled by His95. Residue Glu167 is the Proton acceptor of the active site.

This sequence belongs to the triosephosphate isomerase family. As to quaternary structure, homodimer.

It localises to the glycosome. The enzyme catalyses D-glyceraldehyde 3-phosphate = dihydroxyacetone phosphate. Its pathway is carbohydrate biosynthesis; gluconeogenesis. It functions in the pathway carbohydrate degradation; glycolysis; D-glyceraldehyde 3-phosphate from glycerone phosphate: step 1/1. In Trypanosoma brucei brucei, this protein is Triosephosphate isomerase, glycosomal.